The chain runs to 467 residues: Ammonium transporter Rh type C (467 aa).

At M1–W9 the chain is on the cytoplasmic side. The helical transmembrane segment at R10–V30 threads the bilayer. The Extracellular portion of the chain corresponds to R31–Y61. N48 carries an N-linked (GlcNAc...) asparagine glycan. Residues P62–L82 traverse the membrane as a helical segment. The Cytoplasmic segment spans residues Q83 to G86. Residues Y87–M107 form a helical membrane-spanning segment. Residues Q108–S131 lie on the Extracellular side of the membrane. 2 helical membrane passes run C132–M152 and L153–V173. Over L174–A179 the chain is Extracellular. A helical transmembrane segment spans residues G180–L200. Topologically, residues Y201–N219 are cytoplasmic. Residues L220–M240 form a helical membrane-spanning segment. Residues S241–A251 lie on the Extracellular side of the membrane. Residues I252–L272 traverse the membrane as a helical segment. At H273 to H282 the chain is on the cytoplasmic side. The helical transmembrane segment at I283 to M303 threads the bilayer. A topological domain (extracellular) is located at residue P304. Residues Y305–L325 form a helical membrane-spanning segment. Residues T326–N343 lie on the Cytoplasmic side of the membrane. A helical membrane pass occupies residues L344–S364. At P365–A391 the chain is on the extracellular side. Residues F392–L412 traverse the membrane as a helical segment. The Cytoplasmic portion of the chain corresponds to K413–P467. Over residues E436–H447 the composition is skewed to basic and acidic residues. A disordered region spans residues E436–P467. The segment covering Q458–P467 has biased composition (polar residues).

The protein belongs to the ammonium transporter (TC 2.A.49) family. Rh subfamily. In terms of assembly, homotrimer. Post-translationally, N-glycosylated.

Its subcellular location is the cell membrane. It is found in the apical cell membrane. The catalysed reaction is NH4(+)(in) = NH4(+)(out). It carries out the reaction methylamine(out) = methylamine(in). The enzyme catalyses CO2(out) = CO2(in). In terms of biological role, ammonium transporter involved in the maintenance of acid-base homeostasis. Transports ammonium and its related derivative methylammonium across the plasma membrane of epithelial cells likely contributing to renal transepithelial ammonia transport and ammonia metabolism. Postulated to primarily mediate an electroneutral bidirectional transport of NH3 ammonia species according to a mechanism that implies interaction of an NH4(+) ion with acidic residues of the pore entry followed by dissociation of NH4(+) into NH3 and H(+). As a result NH3 transits through the central pore and is protonated on the extracellular side reforming NH4(+). May act as a CO2 channel providing for renal acid secretion. The polypeptide is Ammonium transporter Rh type C (RHCG) (Oryctolagus cuniculus (Rabbit)).